The primary structure comprises 752 residues: Putative xanthine dehydrogenase molybdenum-binding subunit XdhA (752 aa).

Residues Gln-206, Phe-237, Arg-350, and Ala-516 each contribute to the Mo-molybdopterin site.

This sequence belongs to the xanthine dehydrogenase family. Heterotrimer of XdhA, XdhB and XdhC. It depends on Mo-molybdopterin as a cofactor.

The catalysed reaction is xanthine + NAD(+) + H2O = urate + NADH + H(+). It catalyses the reaction hypoxanthine + NAD(+) + H2O = xanthine + NADH + H(+). It functions in the pathway purine metabolism; hypoxanthine degradation; urate from hypoxanthine: step 1/2. Its pathway is purine metabolism; hypoxanthine degradation; urate from hypoxanthine: step 2/2. Its function is as follows. Presumed to be a dehydrogenase, but possibly an oxidase. Participates in limited purine salvage (requires aspartate) but does not support aerobic growth on purines as the sole carbon source (purine catabolism). Deletion results in increased adenine sensitivity, suggesting that this protein contributes to the conversion of adenine to guanine nucleotides during purine salvage. In Escherichia coli (strain K12), this protein is Putative xanthine dehydrogenase molybdenum-binding subunit XdhA (xdhA).